The chain runs to 124 residues: Small ribosomal subunit protein bS16 (124 aa).

The interval valine 88–glycine 124 is disordered. The span at lysine 100–alanine 114 shows a compositional bias: basic and acidic residues. The span at alanine 115 to glycine 124 shows a compositional bias: low complexity.

It belongs to the bacterial ribosomal protein bS16 family.

The protein is Small ribosomal subunit protein bS16 of Rhodospirillum rubrum (strain ATCC 11170 / ATH 1.1.1 / DSM 467 / LMG 4362 / NCIMB 8255 / S1).